Reading from the N-terminus, the 105-residue chain is Small ribosomal subunit protein uS10 (105 aa).

The protein belongs to the universal ribosomal protein uS10 family. In terms of assembly, part of the 30S ribosomal subunit.

Functionally, involved in the binding of tRNA to the ribosomes. In Rickettsia bellii (strain OSU 85-389), this protein is Small ribosomal subunit protein uS10.